The following is a 396-amino-acid chain: tRNA (guanine-N(7)-)-methyltransferase (396 aa).

Residues E125, E150, and D177 each contribute to the S-adenosyl-L-methionine site. 2 residues coordinate substrate: K203 and D233.

The protein belongs to the class I-like SAM-binding methyltransferase superfamily. TrmB family.

The enzyme catalyses guanosine(46) in tRNA + S-adenosyl-L-methionine = N(7)-methylguanosine(46) in tRNA + S-adenosyl-L-homocysteine. It participates in tRNA modification; N(7)-methylguanine-tRNA biosynthesis. Functionally, catalyzes the formation of N(7)-methylguanine at position 46 (m7G46) in tRNA. In Helicobacter hepaticus (strain ATCC 51449 / 3B1), this protein is tRNA (guanine-N(7)-)-methyltransferase.